Here is a 64-residue protein sequence, read N- to C-terminus: Large ribosomal subunit protein bL28 (64 aa).

Belongs to the bacterial ribosomal protein bL28 family.

This chain is Large ribosomal subunit protein bL28, found in Mycoplasmoides gallisepticum (strain R(low / passage 15 / clone 2)) (Mycoplasma gallisepticum).